A 157-amino-acid chain; its full sequence is Thioredoxin 2 (157 aa).

Positions 1 to 22 (MKHILALVVFIISFFCFKDVNC) are cleaved as a signal peptide. Residues 46–157 (LRMYNKMPRL…ELTSTIRKHL (112 aa)) form the Thioredoxin domain. Residues cysteine 82 and cysteine 85 each act as nucleophile in the active site. An intrachain disulfide couples cysteine 82 to cysteine 85.

Belongs to the thioredoxin family. In terms of assembly, monomer. Component of the translocon PTEX complex composed of HSP101, EXP2, PTEX150, PTEX88 and TRX2. In terms of processing, the disulfide bond between Cys-82 and Cys-85 acts as a redox-active center and is reduced by thioredoxin reductase TRXR.

Its function is as follows. Participates in various redox reactions through the reversible oxidation of its active center dithiol to a disulfide and catalyzes dithiol-disulfide exchange reactions. As part of the translocon PTEX complex, plays a role in the export of parasite proteins into the host erythrocyte. The translocon PTEX complex is a multi-protein machinery resident in the parasite parasitophorous vacuolar membrane, responsible for protein secretion into host cells. May contribute to the unfolding of proteins containing the PEXEL localization motif before their passage through the translocon or regulate the PTEX complex function. This Plasmodium berghei (strain Anka) protein is Thioredoxin 2.